Consider the following 105-residue polypeptide: L-rhamnose mutarotase (105 aa).

Y19 lines the substrate pocket. H23 serves as the catalytic Proton donor. Substrate is bound by residues Y42 and 77–78 (WW).

This sequence belongs to the rhamnose mutarotase family. As to quaternary structure, homodimer.

The protein resides in the cytoplasm. It catalyses the reaction alpha-L-rhamnose = beta-L-rhamnose. It functions in the pathway carbohydrate metabolism; L-rhamnose metabolism. Involved in the anomeric conversion of L-rhamnose. This is L-rhamnose mutarotase from Mesorhizobium japonicum (strain LMG 29417 / CECT 9101 / MAFF 303099) (Mesorhizobium loti (strain MAFF 303099)).